Reading from the N-terminus, the 635-residue chain is Elongation factor 4 (635 aa).

The region spanning 11–193 is the tr-type G domain; it reads EKIRNFSIIA…QIVEKVPAPT (183 aa). GTP contacts are provided by residues 23–28 and 140–143; these read DHGKST and NKID.

Belongs to the TRAFAC class translation factor GTPase superfamily. Classic translation factor GTPase family. LepA subfamily.

It localises to the cell membrane. The enzyme catalyses GTP + H2O = GDP + phosphate + H(+). Required for accurate and efficient protein synthesis under certain stress conditions. May act as a fidelity factor of the translation reaction, by catalyzing a one-codon backward translocation of tRNAs on improperly translocated ribosomes. Back-translocation proceeds from a post-translocation (POST) complex to a pre-translocation (PRE) complex, thus giving elongation factor G a second chance to translocate the tRNAs correctly. Binds to ribosomes in a GTP-dependent manner. The polypeptide is Elongation factor 4 (Streptococcus pyogenes serotype M12 (strain MGAS2096)).